The sequence spans 369 residues: Extracellular signal-regulated kinase 2 (369 aa).

The Protein kinase domain occupies 14–304 (YEVLQKIGKG…AEEALAHPFV (291 aa)). Residues 20–28 (IGKGAYGIV) and K43 contribute to the ATP site. D137 functions as the Proton acceptor in the catalytic mechanism. T176 bears the Phosphothreonine mark. Residues 176 to 178 (TEY) carry the TXY motif. Y178 is modified (phosphotyrosine). The tract at residues 346–369 (KKKEERKKQTNPTKPDTTAPTLST) is disordered. The span at 355-369 (TNPTKPDTTAPTLST) shows a compositional bias: polar residues.

Belongs to the protein kinase superfamily. CMGC Ser/Thr protein kinase family. MAP kinase subfamily. It depends on Mg(2+) as a cofactor. Post-translationally, dually phosphorylated on Thr-176 and Tyr-178, which activates the enzyme.

The enzyme catalyses L-seryl-[protein] + ATP = O-phospho-L-seryl-[protein] + ADP + H(+). It catalyses the reaction L-threonyl-[protein] + ATP = O-phospho-L-threonyl-[protein] + ADP + H(+). Activated by tyrosine and threonine phosphorylation. Implicated in the relay of the cAMP chemotactic signal and cell differentiation. Important for receptor-mediated activation of adenylyl cyclase. This Dictyostelium discoideum (Social amoeba) protein is Extracellular signal-regulated kinase 2 (erkB).